The sequence spans 215 residues: Short neuropeptide F (215 aa).

An N-terminal signal peptide occupies residues 1-22; that stretch reads MCRINFTTLSLILVLWSGSLMS. A propeptide spanning residues 23 to 56 is cleaved from the precursor; it reads EPSQNADGSIKGLYEYLLQREYAAPVSYADHQIK. Residues F69 and F101 each carry the phenylalanine amide modification. At W129 the chain carries Tryptophan amide. Residue F157 is modified to Phenylalanine amide. The propeptide occupies 160–215; it reads SDPSWAMFNEHQLDEQQFADATRQPSKTLRGDEPTSIESTEQVESEENSPSNMDEK. The tract at residues 173 to 215 is disordered; sequence DEQQFADATRQPSKTLRGDEPTSIESTEQVESEENSPSNMDEK.

Belongs to the NPY family.

It is found in the secreted. In terms of biological role, plays a role in controlling food intake and regulating body size. The sequence is that of Short neuropeptide F from Aedes aegypti (Yellowfever mosquito).